Reading from the N-terminus, the 332-residue chain is MADHLTANGEEMGVYNLQCIDLSNPDIHESAALLRKACMESGIFYVINHGISQEFMDETFAQFKRFFDLPIEEKMKLVWNKNLRGYRPPIQAVIDDKTKQKDFSEAFHIGVEVSEDDPNAHDFFYGPNLWPPADLLPGWRKAMEKYHQEATNVARKIGRVIAVALDLNEDFFVQPELIGSANANYTNMFHYGVHGANLLKDVVGTTPHCDLNLFTLLATDDIWGLQICREKNAESQVWEAIAPVKGAYIVNVGDMLEMLTNGIFRSILHRVVFNQERYSTGTFICPNHDYIIKCLPTCTSEENPPKYPTMRTGQYIYNRFNQLSASTVGKKA.

The Fe2OG dioxygenase domain maps to 181 to 286 (ANANYTNMFH…RYSTGTFICP (106 aa)). Fe cation is bound by residues histidine 208, aspartate 210, and histidine 269. Residue arginine 277 participates in 2-oxoglutarate binding.

It belongs to the iron/ascorbate-dependent oxidoreductase family. Fe(2+) is required as a cofactor. As to expression, mainly expressed in petioles and, to a lower extent, in roots.

The catalysed reaction is (1S,3bR,4R,5aR,9aR,9bR,11aS)-1-(1-hydroxy-4-oxobutan-2-yl)-3b,6,6,9a,11a-pentamethyl-7-oxo-1H,2H,3bH,4H,5H,5aH,6H,7H,9aH,9bH,10H,11H,11aH-cyclopenta[a]phenanthren-4-yl acetate + 2-oxoglutarate + O2 = azadirone + succinate + CO2 + 2 H2O. Its pathway is secondary metabolite biosynthesis; terpenoid biosynthesis. 2-oxoglutarate-Fe(II) type oxidoreductase involved in the biosynthesis of limonoids triterpene natural products such as azadirachtin, an antifeedant widely used as bioinsecticide, and possessing many medicinal applications including anti-tumoral, anti-malarial, anti-rheumatic, antibacterial, anti-inflammatory, anti-pyretic and diuretic effects. Catalyzes the formation of azadirone. This chain is Azadirone synthase LFS, found in Melia azedarach (Chinaberry tree).